The sequence spans 426 residues: tRNA(Ile)-lysidine synthase (426 aa).

Serine 21–serine 26 provides a ligand contact to ATP.

The protein belongs to the tRNA(Ile)-lysidine synthase family.

It is found in the cytoplasm. It carries out the reaction cytidine(34) in tRNA(Ile2) + L-lysine + ATP = lysidine(34) in tRNA(Ile2) + AMP + diphosphate + H(+). Ligates lysine onto the cytidine present at position 34 of the AUA codon-specific tRNA(Ile) that contains the anticodon CAU, in an ATP-dependent manner. Cytidine is converted to lysidine, thus changing the amino acid specificity of the tRNA from methionine to isoleucine. This chain is tRNA(Ile)-lysidine synthase, found in Enterobacter sp. (strain 638).